The primary structure comprises 149 residues: uncharacterized protein (149 aa).

The tract at residues 1–103 is disordered; the sequence is MFGLKVKNAE…SPTQGSRLRH (103 aa). Positions 7-18 are enriched in basic and acidic residues; the sequence is KNAEADTAKSNE. Over residues 26-41 the composition is skewed to low complexity; that stretch reads TGSSTTSGSGQSTQRG. The segment covering 61-72 has biased composition (polar residues); the sequence is GSQGNSGDQGTE.

This sequence belongs to the adhesin P1 family.

This is an uncharacterized protein from Mycoplasma pneumoniae (strain ATCC 29342 / M129 / Subtype 1) (Mycoplasmoides pneumoniae).